The chain runs to 258 residues: Small ribosomal subunit protein uS2 (258 aa).

Residues 234-258 (ETANAEEAMQKAAAVEAAAEAAPAQ) form a disordered region. Residues 236–258 (ANAEEAMQKAAAVEAAAEAAPAQ) are compositionally biased toward low complexity.

This sequence belongs to the universal ribosomal protein uS2 family.

In Desulfovibrio desulfuricans (strain ATCC 27774 / DSM 6949 / MB), this protein is Small ribosomal subunit protein uS2.